The following is a 477-amino-acid chain: Ribulose bisphosphate carboxylase large chain (477 aa).

Residues Met1–Ser2 constitute a propeptide that is removed on maturation. Pro3 is modified (N-acetylproline). Lys14 is modified (N6,N6,N6-trimethyllysine). Asn123 and Thr173 together coordinate substrate. Residue Lys175 is the Proton acceptor of the active site. Residue Lys177 coordinates substrate. Residues Lys201, Asp203, and Glu204 each contribute to the Mg(2+) site. Lys201 is subject to N6-carboxylysine. His294 functions as the Proton acceptor in the catalytic mechanism. Residues Arg295, His327, and Ser379 each coordinate substrate.

The protein belongs to the RuBisCO large chain family. Type I subfamily. As to quaternary structure, heterohexadecamer of 8 large chains and 8 small chains; disulfide-linked. The disulfide link is formed within the large subunit homodimers. Mg(2+) is required as a cofactor. The disulfide bond which can form in the large chain dimeric partners within the hexadecamer appears to be associated with oxidative stress and protein turnover.

The protein localises to the plastid. Its subcellular location is the chloroplast. The enzyme catalyses 2 (2R)-3-phosphoglycerate + 2 H(+) = D-ribulose 1,5-bisphosphate + CO2 + H2O. The catalysed reaction is D-ribulose 1,5-bisphosphate + O2 = 2-phosphoglycolate + (2R)-3-phosphoglycerate + 2 H(+). In terms of biological role, ruBisCO catalyzes two reactions: the carboxylation of D-ribulose 1,5-bisphosphate, the primary event in carbon dioxide fixation, as well as the oxidative fragmentation of the pentose substrate in the photorespiration process. Both reactions occur simultaneously and in competition at the same active site. In Digitalis purpurea (Common foxglove), this protein is Ribulose bisphosphate carboxylase large chain.